The following is a 371-amino-acid chain: Queuine tRNA-ribosyltransferase (371 aa).

Asp89 functions as the Proton acceptor in the catalytic mechanism. Substrate-binding positions include 89–93 (DSGGF), Asp143, Gln185, and Gly212. The interval 243 to 249 (GVGKPED) is RNA binding. Asp262 (nucleophile) is an active-site residue. Positions 267–271 (TRNAR) are RNA binding; important for wobble base 34 recognition. Positions 300, 302, 305, and 331 each coordinate Zn(2+).

It belongs to the queuine tRNA-ribosyltransferase family. As to quaternary structure, homodimer. Within each dimer, one monomer is responsible for RNA recognition and catalysis, while the other monomer binds to the replacement base PreQ1. Zn(2+) is required as a cofactor.

It carries out the reaction 7-aminomethyl-7-carbaguanine + guanosine(34) in tRNA = 7-aminomethyl-7-carbaguanosine(34) in tRNA + guanine. It participates in tRNA modification; tRNA-queuosine biosynthesis. Catalyzes the base-exchange of a guanine (G) residue with the queuine precursor 7-aminomethyl-7-deazaguanine (PreQ1) at position 34 (anticodon wobble position) in tRNAs with GU(N) anticodons (tRNA-Asp, -Asn, -His and -Tyr). Catalysis occurs through a double-displacement mechanism. The nucleophile active site attacks the C1' of nucleotide 34 to detach the guanine base from the RNA, forming a covalent enzyme-RNA intermediate. The proton acceptor active site deprotonates the incoming PreQ1, allowing a nucleophilic attack on the C1' of the ribose to form the product. After dissociation, two additional enzymatic reactions on the tRNA convert PreQ1 to queuine (Q), resulting in the hypermodified nucleoside queuosine (7-(((4,5-cis-dihydroxy-2-cyclopenten-1-yl)amino)methyl)-7-deazaguanosine). The polypeptide is Queuine tRNA-ribosyltransferase (Pseudomonas syringae pv. tomato (strain ATCC BAA-871 / DC3000)).